Reading from the N-terminus, the 250-residue chain is DNA repair protein RecO (250 aa).

Belongs to the RecO family.

Functionally, involved in DNA repair and RecF pathway recombination. The protein is DNA repair protein RecO of Staphylococcus aureus (strain MRSA252).